The primary structure comprises 345 residues: CRISPR-associated endonuclease Cas1 1 (345 aa).

Residues E168, H239, and E254 each coordinate a divalent metal cation.

This sequence belongs to the CRISPR-associated endonuclease Cas1 family. As to quaternary structure, forms a heterotetramer with a Cas2 homodimer. Homodimer. The cofactor is a divalent metal cation.

Functionally, CRISPR (clustered regularly interspaced short palindromic repeat), is an adaptive immune system that provides protection against mobile genetic elements (viruses, transposable elements and conjugative plasmids). CRISPR clusters contain sequences complementary to antecedent mobile elements and target invading nucleic acids. CRISPR clusters are transcribed and processed into CRISPR RNA (crRNA). Involved in the integration of spacer DNA into the CRISPR cassette. Acts as a dsDNA and ssRNA nuclease, binds to linear and circular dsDNA and linear ssRNA and ssDNA. This is CRISPR-associated endonuclease Cas1 1 from Archaeoglobus fulgidus (strain ATCC 49558 / DSM 4304 / JCM 9628 / NBRC 100126 / VC-16).